The following is a 467-amino-acid chain: ATP-dependent protease ATPase subunit HslU (467 aa).

ATP contacts are provided by residues Val22 and 64–69 (GVGKTE). Residues 149 to 192 (QTNNPLESLFGGAIPNFGQNNEDEEEPPTEEIKTKRSEIKRQLE) form a disordered region. Positions 178–192 (EEIKTKRSEIKRQLE) are enriched in basic and acidic residues. ATP is bound by residues Asp280, Glu345, and Arg417.

Belongs to the ClpX chaperone family. HslU subfamily. A double ring-shaped homohexamer of HslV is capped on each side by a ring-shaped HslU homohexamer. The assembly of the HslU/HslV complex is dependent on binding of ATP.

It is found in the cytoplasm. Its function is as follows. ATPase subunit of a proteasome-like degradation complex; this subunit has chaperone activity. The binding of ATP and its subsequent hydrolysis by HslU are essential for unfolding of protein substrates subsequently hydrolyzed by HslV. HslU recognizes the N-terminal part of its protein substrates and unfolds these before they are guided to HslV for hydrolysis. In Staphylococcus aureus (strain MW2), this protein is ATP-dependent protease ATPase subunit HslU.